We begin with the raw amino-acid sequence, 50 residues long: Cytochrome c-555 (50 aa).

Residues Cys-7, Cys-10, His-11, and Met-25 each contribute to the heme site.

Binds 1 heme group per subunit.

It is found in the cell membrane. This chain is Cytochrome c-555, found in Schinkia azotoformans (Bacillus azotoformans).